Reading from the N-terminus, the 726-residue chain is Phenylalanine--tRNA ligase beta subunit (726 aa).

Residues 38–150 form the tRNA-binding domain; that stretch reads FSSSKGLLFA…NFASLNDDAS (113 aa). The B5 domain occupies 394-467; sequence DKKVEINFDE…RFYNYDNFKE (74 aa). Mg(2+) contacts are provided by D445, D451, E454, and E455.

It belongs to the phenylalanyl-tRNA synthetase beta subunit family. Type 1 subfamily. Tetramer of two alpha and two beta subunits. The cofactor is Mg(2+).

Its subcellular location is the cytoplasm. It catalyses the reaction tRNA(Phe) + L-phenylalanine + ATP = L-phenylalanyl-tRNA(Phe) + AMP + diphosphate + H(+). In Mycoplasmopsis synoviae (strain 53) (Mycoplasma synoviae), this protein is Phenylalanine--tRNA ligase beta subunit.